A 422-amino-acid polypeptide reads, in one-letter code: Histidine--tRNA ligase (422 aa).

The protein belongs to the class-II aminoacyl-tRNA synthetase family. In terms of assembly, homodimer.

It is found in the cytoplasm. It catalyses the reaction tRNA(His) + L-histidine + ATP = L-histidyl-tRNA(His) + AMP + diphosphate + H(+). In Vibrio vulnificus (strain CMCP6), this protein is Histidine--tRNA ligase.